Reading from the N-terminus, the 257-residue chain is 3-methyl-2-oxobutanoate hydroxymethyltransferase (257 aa).

Residues Asp42 and Asp86 each coordinate Mg(2+). 3-methyl-2-oxobutanoate is bound by residues 42-43 (DS), Asp86, and Lys116. Glu118 is a Mg(2+) binding site. Glu185 acts as the Proton acceptor in catalysis.

Belongs to the PanB family. As to quaternary structure, homodecamer; pentamer of dimers. Requires Mg(2+) as cofactor.

It is found in the cytoplasm. The catalysed reaction is 3-methyl-2-oxobutanoate + (6R)-5,10-methylene-5,6,7,8-tetrahydrofolate + H2O = 2-dehydropantoate + (6S)-5,6,7,8-tetrahydrofolate. It functions in the pathway cofactor biosynthesis; (R)-pantothenate biosynthesis; (R)-pantoate from 3-methyl-2-oxobutanoate: step 1/2. Catalyzes the reversible reaction in which hydroxymethyl group from 5,10-methylenetetrahydrofolate is transferred onto alpha-ketoisovalerate to form ketopantoate. The sequence is that of 3-methyl-2-oxobutanoate hydroxymethyltransferase from Prochlorococcus marinus subsp. pastoris (strain CCMP1986 / NIES-2087 / MED4).